The primary structure comprises 630 residues: Zinc finger protein 37 homolog (630 aa).

3 disordered regions span residues 1-45 (MSVS…SAAE), 77-172 (KPDM…PSKK), and 193-285 (HSRN…KHEK). Residues 14-30 (ETVDRRRSAETTKEAGR) are compositionally biased toward basic and acidic residues. One can recognise a KRAB domain in the interval 32 to 103 (LEMAVSEPEA…KGKRPSQGCP (72 aa)). S42 is modified (phosphoserine). Over residues 110–122 (KQKETDGKVQKDD) the composition is skewed to basic and acidic residues. A compositionally biased stretch (basic residues) spans 161–172 (NNLHKKHVPSKK). The segment covering 193–206 (HSRNCVKRKSDAAK) has biased composition (basic and acidic residues). Residues 221 to 231 (KGKKQTGKKHE) are compositionally biased toward basic residues. 2 stretches are compositionally biased toward basic and acidic residues: residues 232–243 (KLSSHSSSDKCN) and 260–274 (IKQDKIQTGEKHEKS). C2H2-type zinc fingers lie at residues 293-315 (YECNQCGKVLSHKQGLIDHQRVH) and 321-343 (YECNECGIAFSQKSHLVVHQRTH). A C2H2-type 3; atypical zinc finger spans residues 349–367 (YECIQCGKAHGHKHALTDH). 9 C2H2-type zinc fingers span residues 377-399 (YECAECGKTFRHSSNLIQHVRSH), 405-427 (YECKECGKSFRYNSSLTEHVRTH), 433-455 (YECNECGKAFKYSSSLTKHMRIH), 461-483 (FECNECGKAFSKKSHLIIHQRTH), 489-511 (YKCNECGKAFGHSSSLTYHMRTH), 517-539 (FECNQCGKGFKQIEGLTQHQRVH), 545-567 (YECNECGKAFSQKSHLIVHQRTH), 573-595 (YECNECEKAFNAKSQLVIHQRSH), and 601-623 (YECNECGKTFKQNASLTKHVKTH).

The protein belongs to the krueppel C2H2-type zinc-finger protein family. In terms of tissue distribution, expressed at low level in several tissues including fetal cartilage.

Its subcellular location is the nucleus. Functionally, may be involved in transcriptional regulation. The sequence is that of Zinc finger protein 37 homolog (ZFP37) from Homo sapiens (Human).